We begin with the raw amino-acid sequence, 271 residues long: MLGLENKLKLYGFNNLTKTLSFNIYDVCYAKSEREQKDYIAYIDEQYNSERLTRILCDVTESIGAHVLNISKQDYDPQGASVTILVSEQTLAVKEIDASCNKGEIDILKTRDTVVGHLDKSHVTVHTYPEYHPDNSIATFRVDIDVATCGEVSPLNALNYLIGSFDSDIITIDYRVRGFTRDVDGKKLFIDHKITSIQDYIDENTLKRYDAMDINVYQSNIFHTKMLIKEIELQNYLFNRDVYEIKPKQRLEIENNLRREMIEIFSGTNIY.

Serine 121 (schiff-base intermediate with substrate; via pyruvic acid) is an active-site residue. Serine 121 is modified (pyruvic acid (Ser); by autocatalysis). The Proton acceptor; for processing activity role is filled by histidine 126. The Proton donor; for catalytic activity role is filled by cysteine 149.

It belongs to the prokaryotic AdoMetDC family. Type 2 subfamily. Heterooctamer of four alpha and four beta chains arranged as a tetramer of alpha/beta heterodimers. The cofactor is pyruvate. In terms of processing, is synthesized initially as an inactive proenzyme. Formation of the active enzyme involves a self-maturation process in which the active site pyruvoyl group is generated from an internal serine residue via an autocatalytic post-translational modification. Two non-identical subunits are generated from the proenzyme in this reaction, and the pyruvate is formed at the N-terminus of the alpha chain, which is derived from the carboxyl end of the proenzyme. The post-translation cleavage follows an unusual pathway, termed non-hydrolytic serinolysis, in which the side chain hydroxyl group of the serine supplies its oxygen atom to form the C-terminus of the beta chain, while the remainder of the serine residue undergoes an oxidative deamination to produce ammonia and the pyruvoyl group blocking the N-terminus of the alpha chain.

It catalyses the reaction S-adenosyl-L-methionine + H(+) = S-adenosyl 3-(methylsulfanyl)propylamine + CO2. Its pathway is amine and polyamine biosynthesis; S-adenosylmethioninamine biosynthesis; S-adenosylmethioninamine from S-adenosyl-L-methionine: step 1/1. Functionally, catalyzes the decarboxylation of S-adenosylmethionine to S-adenosylmethioninamine (dcAdoMet), the propylamine donor required for the synthesis of the polyamines spermine and spermidine from the diamine putrescine. The polypeptide is S-adenosylmethionine decarboxylase proenzyme (Clostridium beijerinckii (strain ATCC 51743 / NCIMB 8052) (Clostridium acetobutylicum)).